Reading from the N-terminus, the 213-residue chain is Small ribosomal subunit protein uS3 (213 aa).

Residues Ile-38–Arg-106 form the KH type-2 domain.

Belongs to the universal ribosomal protein uS3 family. In terms of assembly, part of the 30S ribosomal subunit. Forms a tight complex with proteins S10 and S14.

Binds the lower part of the 30S subunit head. Binds mRNA in the 70S ribosome, positioning it for translation. This chain is Small ribosomal subunit protein uS3, found in Oleidesulfovibrio alaskensis (strain ATCC BAA-1058 / DSM 17464 / G20) (Desulfovibrio alaskensis).